A 255-amino-acid polypeptide reads, in one-letter code: Enkurin (255 aa).

Residues 1 to 10 (MDSPCTSESI) show a composition bias toward polar residues. Disordered regions lie at residues 1-25 (MDSP…PQHP) and 67-96 (SKEK…DHPV). Positions 73 to 83 (PPKKKFNRCSP) are enriched in basic residues. Residues 83-89 (PKKPAVP) carry the SH3-binding motif. The Enkurin domain maps to 160-252 (KRNEDVKKAQ…VIEKHKIIYI (93 aa)). Residues 160–255 (KRNEDVKKAQ…KHKIIYIANK (96 aa)) are interaction with TRPC proteins. The IQ domain occupies 176-187 (IQENLKKAAMKR).

Microtubule inner protein component of sperm flagellar doublet microtubules. Binds calmodulin via its IQ domain. Interacts with TRPC1, TRPC2, TRPC5, but not TRPC3. Interacts with CFAP45. In terms of tissue distribution, high expression in testis and vomeronasal organ and lower expression in ovary, heart, lung, and brain. Not expressed in other tissues.

It localises to the cytoplasm. It is found in the cytoskeleton. Its subcellular location is the cilium axoneme. The protein localises to the flagellum axoneme. Functionally, adapter that functions to localize a calcium-sensitive signal transduction machinery in sperm to a calcium-permeable ion channel. Microtubule inner protein (MIP) part of the dynein-decorated doublet microtubules (DMTs) in cilia axoneme, which is required for motile cilia beating. This chain is Enkurin (Enkur), found in Mus musculus (Mouse).